A 214-amino-acid chain; its full sequence is Riboflavin kinase (214 aa).

Residues 1–26 (MRPDGPRDPVVGPDSGPEPPYPVRLS) are disordered. The Mg(2+) site is built by threonine 44 and asparagine 46. Glutamate 112 acts as the Nucleophile in catalysis.

The protein belongs to the flavokinase family. Requires Zn(2+) as cofactor. It depends on Mg(2+) as a cofactor.

The catalysed reaction is riboflavin + ATP = FMN + ADP + H(+). Its pathway is cofactor biosynthesis; FMN biosynthesis; FMN from riboflavin (ATP route): step 1/1. Its function is as follows. Catalyzes the phosphorylation of riboflavin (vitamin B2) to form flavin mononucleotide (FMN) coenzyme. This is Riboflavin kinase (fmn1) from Aspergillus clavatus (strain ATCC 1007 / CBS 513.65 / DSM 816 / NCTC 3887 / NRRL 1 / QM 1276 / 107).